A 947-amino-acid chain; its full sequence is Bifunctional glutamine synthetase adenylyltransferase/adenylyl-removing enzyme (947 aa).

Positions 1–440 (MTPLSSPLSQ…VFNELIGDDE (440 aa)) are adenylyl removase. Residues 450–947 (SEPWREVWQD…ASWRKWLVAV (498 aa)) are adenylyl transferase.

This sequence belongs to the GlnE family. It depends on Mg(2+) as a cofactor.

It carries out the reaction [glutamine synthetase]-O(4)-(5'-adenylyl)-L-tyrosine + phosphate = [glutamine synthetase]-L-tyrosine + ADP. It catalyses the reaction [glutamine synthetase]-L-tyrosine + ATP = [glutamine synthetase]-O(4)-(5'-adenylyl)-L-tyrosine + diphosphate. Involved in the regulation of glutamine synthetase GlnA, a key enzyme in the process to assimilate ammonia. When cellular nitrogen levels are high, the C-terminal adenylyl transferase (AT) inactivates GlnA by covalent transfer of an adenylyl group from ATP to specific tyrosine residue of GlnA, thus reducing its activity. Conversely, when nitrogen levels are low, the N-terminal adenylyl removase (AR) activates GlnA by removing the adenylyl group by phosphorolysis, increasing its activity. The regulatory region of GlnE binds the signal transduction protein PII (GlnB) which indicates the nitrogen status of the cell. The protein is Bifunctional glutamine synthetase adenylyltransferase/adenylyl-removing enzyme of Salmonella heidelberg (strain SL476).